A 396-amino-acid polypeptide reads, in one-letter code: Tryptophan synthase beta chain (396 aa).

K88 carries the post-translational modification N6-(pyridoxal phosphate)lysine.

This sequence belongs to the TrpB family. In terms of assembly, tetramer of two alpha and two beta chains. It depends on pyridoxal 5'-phosphate as a cofactor.

The enzyme catalyses (1S,2R)-1-C-(indol-3-yl)glycerol 3-phosphate + L-serine = D-glyceraldehyde 3-phosphate + L-tryptophan + H2O. It functions in the pathway amino-acid biosynthesis; L-tryptophan biosynthesis; L-tryptophan from chorismate: step 5/5. Functionally, the beta subunit is responsible for the synthesis of L-tryptophan from indole and L-serine. The polypeptide is Tryptophan synthase beta chain (Leptospira biflexa serovar Patoc (strain Patoc 1 / Ames)).